We begin with the raw amino-acid sequence, 506 residues long: Maturase K (506 aa).

It belongs to the intron maturase 2 family. MatK subfamily.

The protein localises to the plastid. Its subcellular location is the chloroplast. Functionally, usually encoded in the trnK tRNA gene intron. Probably assists in splicing its own and other chloroplast group II introns. The polypeptide is Maturase K (Trifolium beckwithii (Beckwith's clover)).